Reading from the N-terminus, the 76-residue chain is UPF0291 protein Aflv_1503 (76 aa).

Residues 56–76 (DPNGNDVTPQKLKDSKKKRLH) are disordered.

This sequence belongs to the UPF0291 family.

The protein localises to the cytoplasm. This Anoxybacillus flavithermus (strain DSM 21510 / WK1) protein is UPF0291 protein Aflv_1503.